The chain runs to 387 residues: Mannitol-1-phosphate 5-dehydrogenase (387 aa).

3–14 is a binding site for NAD(+); that stretch reads AVHFGAGNIGRG.

Belongs to the mannitol dehydrogenase family.

The enzyme catalyses D-mannitol 1-phosphate + NAD(+) = beta-D-fructose 6-phosphate + NADH + H(+). This chain is Mannitol-1-phosphate 5-dehydrogenase, found in Pseudarthrobacter chlorophenolicus (strain ATCC 700700 / DSM 12829 / CIP 107037 / JCM 12360 / KCTC 9906 / NCIMB 13794 / A6) (Arthrobacter chlorophenolicus).